We begin with the raw amino-acid sequence, 129 residues long: Large ribosomal subunit protein bL12 (129 aa).

The protein belongs to the bacterial ribosomal protein bL12 family. In terms of assembly, homodimer. Part of the ribosomal stalk of the 50S ribosomal subunit. Forms a multimeric L10(L12)X complex, where L10 forms an elongated spine to which 2 to 4 L12 dimers bind in a sequential fashion. Binds GTP-bound translation factors.

Its function is as follows. Forms part of the ribosomal stalk which helps the ribosome interact with GTP-bound translation factors. Is thus essential for accurate translation. In Fervidobacterium nodosum (strain ATCC 35602 / DSM 5306 / Rt17-B1), this protein is Large ribosomal subunit protein bL12.